A 202-amino-acid polypeptide reads, in one-letter code: Ribonuclease HII (202 aa).

Residues 13-202 (KIEAGLDEAG…HFKPKQLDLF (190 aa)) form the RNase H type-2 domain. The a divalent metal cation site is built by D19, E20, and D112.

It belongs to the RNase HII family. Mn(2+) serves as cofactor. Mg(2+) is required as a cofactor.

It is found in the cytoplasm. The enzyme catalyses Endonucleolytic cleavage to 5'-phosphomonoester.. Functionally, endonuclease that specifically degrades the RNA of RNA-DNA hybrids. In Cytophaga hutchinsonii (strain ATCC 33406 / DSM 1761 / CIP 103989 / NBRC 15051 / NCIMB 9469 / D465), this protein is Ribonuclease HII.